We begin with the raw amino-acid sequence, 120 residues long: Aspartate 1-decarboxylase (120 aa).

Ser-25 acts as the Schiff-base intermediate with substrate; via pyruvic acid in catalysis. Ser-25 is modified (pyruvic acid (Ser)). Thr-57 provides a ligand contact to substrate. Tyr-58 serves as the catalytic Proton donor. 73-75 (GAA) lines the substrate pocket.

The protein belongs to the PanD family. Heterooctamer of four alpha and four beta subunits. Pyruvate serves as cofactor. Post-translationally, is synthesized initially as an inactive proenzyme, which is activated by self-cleavage at a specific serine bond to produce a beta-subunit with a hydroxyl group at its C-terminus and an alpha-subunit with a pyruvoyl group at its N-terminus.

The protein localises to the cytoplasm. It catalyses the reaction L-aspartate + H(+) = beta-alanine + CO2. Its pathway is cofactor biosynthesis; (R)-pantothenate biosynthesis; beta-alanine from L-aspartate: step 1/1. In terms of biological role, catalyzes the pyruvoyl-dependent decarboxylation of aspartate to produce beta-alanine. The protein is Aspartate 1-decarboxylase of Polynucleobacter asymbioticus (strain DSM 18221 / CIP 109841 / QLW-P1DMWA-1) (Polynucleobacter necessarius subsp. asymbioticus).